A 459-amino-acid chain; its full sequence is Bifunctional protein GlmU (459 aa).

Residues 1–230 (MSNRFAVILA…FDETLGVNDR (230 aa)) are pyrophosphorylase. Residues 9-12 (LAAG), lysine 23, glutamine 73, and 78-79 (GT) contribute to the UDP-N-acetyl-alpha-D-glucosamine site. Aspartate 103 lines the Mg(2+) pocket. Positions 140, 155, 170, and 228 each coordinate UDP-N-acetyl-alpha-D-glucosamine. Asparagine 228 is a Mg(2+) binding site. Positions 231-251 (VALSQAEIIMKNRINRKNMVN) are linker. An N-acetyltransferase region spans residues 252-459 (GVTIIDPSNT…VDQLLNKKKS (208 aa)). The UDP-N-acetyl-alpha-D-glucosamine site is built by arginine 333 and lysine 351. Histidine 363 (proton acceptor) is an active-site residue. UDP-N-acetyl-alpha-D-glucosamine contacts are provided by tyrosine 366 and asparagine 377. Residues 386–387 (NY), alanine 423, and arginine 440 contribute to the acetyl-CoA site.

The protein in the N-terminal section; belongs to the N-acetylglucosamine-1-phosphate uridyltransferase family. In the C-terminal section; belongs to the transferase hexapeptide repeat family. As to quaternary structure, homotrimer. The cofactor is Mg(2+).

The protein localises to the cytoplasm. It catalyses the reaction alpha-D-glucosamine 1-phosphate + acetyl-CoA = N-acetyl-alpha-D-glucosamine 1-phosphate + CoA + H(+). It carries out the reaction N-acetyl-alpha-D-glucosamine 1-phosphate + UTP + H(+) = UDP-N-acetyl-alpha-D-glucosamine + diphosphate. The protein operates within nucleotide-sugar biosynthesis; UDP-N-acetyl-alpha-D-glucosamine biosynthesis; N-acetyl-alpha-D-glucosamine 1-phosphate from alpha-D-glucosamine 6-phosphate (route II): step 2/2. It functions in the pathway nucleotide-sugar biosynthesis; UDP-N-acetyl-alpha-D-glucosamine biosynthesis; UDP-N-acetyl-alpha-D-glucosamine from N-acetyl-alpha-D-glucosamine 1-phosphate: step 1/1. It participates in bacterial outer membrane biogenesis; LPS lipid A biosynthesis. In terms of biological role, catalyzes the last two sequential reactions in the de novo biosynthetic pathway for UDP-N-acetylglucosamine (UDP-GlcNAc). The C-terminal domain catalyzes the transfer of acetyl group from acetyl coenzyme A to glucosamine-1-phosphate (GlcN-1-P) to produce N-acetylglucosamine-1-phosphate (GlcNAc-1-P), which is converted into UDP-GlcNAc by the transfer of uridine 5-monophosphate (from uridine 5-triphosphate), a reaction catalyzed by the N-terminal domain. The polypeptide is Bifunctional protein GlmU (Bacillus mycoides (strain KBAB4) (Bacillus weihenstephanensis)).